A 194-amino-acid chain; its full sequence is uncharacterized protein (194 aa).

Positions Gln-2–His-62 constitute an HTH tetR-type domain. A DNA-binding region (H-T-H motif) is located at residues Ala-25–Phe-44.

This is an uncharacterized protein from Mycobacterium tuberculosis (strain CDC 1551 / Oshkosh).